We begin with the raw amino-acid sequence, 183 residues long: Acireductone dioxygenase (183 aa).

The tract at residues methionine 1–leucine 21 is disordered. Fe(2+) is bound by residues histidine 90, histidine 92, glutamate 96, and histidine 135. 4 residues coordinate Ni(2+): histidine 90, histidine 92, glutamate 96, and histidine 135.

The protein belongs to the acireductone dioxygenase (ARD) family. Fe(2+) is required as a cofactor. The cofactor is Ni(2+).

It localises to the cytoplasm. It is found in the nucleus. The catalysed reaction is 1,2-dihydroxy-5-(methylsulfanyl)pent-1-en-3-one + O2 = 4-methylsulfanyl-2-oxobutanoate + formate + 2 H(+). The enzyme catalyses 1,2-dihydroxy-5-(methylsulfanyl)pent-1-en-3-one + O2 = 3-(methylsulfanyl)propanoate + CO + formate + 2 H(+). Its pathway is amino-acid biosynthesis; L-methionine biosynthesis via salvage pathway; L-methionine from S-methyl-5-thio-alpha-D-ribose 1-phosphate: step 5/6. Its function is as follows. Catalyzes 2 different reactions between oxygen and the acireductone 1,2-dihydroxy-3-keto-5-methylthiopentene (DHK-MTPene) depending upon the metal bound in the active site. Fe-containing acireductone dioxygenase (Fe-ARD) produces formate and 2-keto-4-methylthiobutyrate (KMTB), the alpha-ketoacid precursor of methionine in the methionine recycle pathway. Ni-containing acireductone dioxygenase (Ni-ARD) produces methylthiopropionate, carbon monoxide and formate, and does not lie on the methionine recycle pathway. The protein is Acireductone dioxygenase of Ixodes scapularis (Black-legged tick).